Here is a 273-residue protein sequence, read N- to C-terminus: Large ribosomal subunit protein uL2cy (273 aa).

Disordered regions lie at residues 1–27 (MAIHLYKTSTPSTRNGAVDSQVKSNPR) and 224–273 (NPVD…RRRK).

Belongs to the universal ribosomal protein uL2 family. Part of the 50S ribosomal subunit.

It is found in the plastid. It localises to the chloroplast. The chain is Large ribosomal subunit protein uL2cy (rpl2-B) from Liriodendron tulipifera (Tuliptree).